The sequence spans 385 residues: Lipid-A-disaccharide synthase 2 (385 aa).

The protein belongs to the LpxB family.

The catalysed reaction is a lipid X + a UDP-2-N,3-O-bis[(3R)-3-hydroxyacyl]-alpha-D-glucosamine = a lipid A disaccharide + UDP + H(+). The protein operates within bacterial outer membrane biogenesis; LPS lipid A biosynthesis. Its function is as follows. Condensation of UDP-2,3-diacylglucosamine and 2,3-diacylglucosamine-1-phosphate to form lipid A disaccharide, a precursor of lipid A, a phosphorylated glycolipid that anchors the lipopolysaccharide to the outer membrane of the cell. This is Lipid-A-disaccharide synthase 2 from Legionella pneumophila (strain Lens).